The primary structure comprises 207 residues: Small ribosomal subunit protein uS4 (207 aa).

The tract at residues 31-52 (KAKFDSKPGQHGRTSGARTSDY) is disordered. Residues 97 to 157 (CRLDNVVYRM…DKSKKQARIV (61 aa)) form the S4 RNA-binding domain.

The protein belongs to the universal ribosomal protein uS4 family. As to quaternary structure, part of the 30S ribosomal subunit. Contacts protein S5. The interaction surface between S4 and S5 is involved in control of translational fidelity.

Functionally, one of the primary rRNA binding proteins, it binds directly to 16S rRNA where it nucleates assembly of the body of the 30S subunit. Its function is as follows. With S5 and S12 plays an important role in translational accuracy. This is Small ribosomal subunit protein uS4 from Acidovorax sp. (strain JS42).